The chain runs to 218 residues: Riboflavin kinase (218 aa).

The signal sequence occupies residues 1-19; the sequence is MFTWTIYVSLLLVLAGTFL. Threonine 72 and asparagine 74 together coordinate Mg(2+). Residue glutamate 155 is the Nucleophile of the active site.

It belongs to the flavokinase family. It depends on Zn(2+) as a cofactor. Mg(2+) is required as a cofactor.

It localises to the microsome. It is found in the mitochondrion inner membrane. The protein localises to the endoplasmic reticulum. It carries out the reaction riboflavin + ATP = FMN + ADP + H(+). Its pathway is cofactor biosynthesis; FMN biosynthesis; FMN from riboflavin (ATP route): step 1/1. Functionally, catalyzes the phosphorylation of riboflavin (vitamin B2) to form flavin mononucleotide (FMN) coenzyme. The chain is Riboflavin kinase (FMN1) from Saccharomyces cerevisiae (strain ATCC 204508 / S288c) (Baker's yeast).